The following is a 157-amino-acid chain: ATP synthase subunit b (157 aa).

The helical transmembrane segment at 7-29 (LVSQAIAFSIFIWFTTKFVWPYL) threads the bilayer.

This sequence belongs to the ATPase B chain family. As to quaternary structure, F-type ATPases have 2 components, F(1) - the catalytic core - and F(0) - the membrane proton channel. F(1) has five subunits: alpha(3), beta(3), gamma(1), delta(1), epsilon(1). F(0) has three main subunits: a(1), b(2) and c(10-14). The alpha and beta chains form an alternating ring which encloses part of the gamma chain. F(1) is attached to F(0) by a central stalk formed by the gamma and epsilon chains, while a peripheral stalk is formed by the delta and b chains.

Its subcellular location is the cell inner membrane. In terms of biological role, f(1)F(0) ATP synthase produces ATP from ADP in the presence of a proton or sodium gradient. F-type ATPases consist of two structural domains, F(1) containing the extramembraneous catalytic core and F(0) containing the membrane proton channel, linked together by a central stalk and a peripheral stalk. During catalysis, ATP synthesis in the catalytic domain of F(1) is coupled via a rotary mechanism of the central stalk subunits to proton translocation. Functionally, component of the F(0) channel, it forms part of the peripheral stalk, linking F(1) to F(0). The protein is ATP synthase subunit b of Nitrosomonas eutropha (strain DSM 101675 / C91 / Nm57).